The primary structure comprises 220 residues: Cytidylate kinase (220 aa).

An ATP-binding site is contributed by 10–18 (GPASSGKST).

Belongs to the cytidylate kinase family. Type 1 subfamily.

The protein localises to the cytoplasm. The enzyme catalyses CMP + ATP = CDP + ADP. It carries out the reaction dCMP + ATP = dCDP + ADP. The polypeptide is Cytidylate kinase (Lactococcus lactis subsp. cremoris (strain MG1363)).